Here is a 463-residue protein sequence, read N- to C-terminus: Senescence/dehydration-associated protein At3g51250 (463 aa).

Basic and acidic residues predominate over residues 1–12 (MNPSHGGDDKQR). 3 disordered regions span residues 1-31 (MNPSHGGDDKQRPAMYPQVDQSIPDNPFAST), 52-74 (PNLFPDHGDASNDQSPSAPPQAT), and 146-172 (IHPPKEKGQGSGSDSDDEQGQKSKSKS). The segment covering 19–31 (VDQSIPDNPFAST) has biased composition (polar residues). The Senescence domain occupies 269–437 (IASGSGKLIR…AWVAFKIRKA (169 aa)).

This Arabidopsis thaliana (Mouse-ear cress) protein is Senescence/dehydration-associated protein At3g51250.